Here is a 307-residue protein sequence, read N- to C-terminus: Ubiquitin recognition factor in ER-associated degradation protein 1 (307 aa).

Residue Met1 is modified to N-acetylmethionine. 5 positions are modified to phosphoserine: Ser129, Ser231, Ser245, Ser247, and Ser299. Disordered regions lie at residues 230–255 (GSGN…GDIK) and 288–307 (GRFI…GRKP).

This sequence belongs to the UFD1 family. Heterodimer with NPLOC4, this heterodimer binds VCP and inhibits Golgi membrane fusion. Interacts with USP13. Interacts with ZFAND2B; probably through VCP.

The protein resides in the nucleus. Its subcellular location is the cytoplasm. It localises to the cytosol. It participates in protein degradation; proteasomal ubiquitin-dependent pathway. Functionally, essential component of the ubiquitin-dependent proteolytic pathway which degrades ubiquitin fusion proteins. The ternary complex containing UFD1, VCP and NPLOC4 binds ubiquitinated proteins and is necessary for the export of misfolded proteins from the ER to the cytoplasm, where they are degraded by the proteasome. The NPLOC4-UFD1-VCP complex regulates spindle disassembly at the end of mitosis and is necessary for the formation of a closed nuclear envelope. It may be involved in the development of some ectoderm-derived structures. Acts as a negative regulator of type I interferon production via the complex formed with VCP and NPLOC4, which binds to RIGI and recruits RNF125 to promote ubiquitination and degradation of RIGI. This is Ubiquitin recognition factor in ER-associated degradation protein 1 from Mus musculus (Mouse).